The primary structure comprises 315 residues: Transaldolase (315 aa).

The active-site Schiff-base intermediate with substrate is the K128.

The protein belongs to the transaldolase family. Type 1 subfamily. In terms of assembly, homodimer.

It is found in the cytoplasm. The enzyme catalyses D-sedoheptulose 7-phosphate + D-glyceraldehyde 3-phosphate = D-erythrose 4-phosphate + beta-D-fructose 6-phosphate. The protein operates within carbohydrate degradation; pentose phosphate pathway; D-glyceraldehyde 3-phosphate and beta-D-fructose 6-phosphate from D-ribose 5-phosphate and D-xylulose 5-phosphate (non-oxidative stage): step 2/3. Transaldolase is important for the balance of metabolites in the pentose-phosphate pathway. In Opitutus terrae (strain DSM 11246 / JCM 15787 / PB90-1), this protein is Transaldolase.